The following is a 780-amino-acid chain: Nuclear cap-binding protein subunit 1 (780 aa).

Positions 1-25 are disordered; the sequence is MSSYRGSTRPRKRTREGENYGFRPH. Ser-29 is modified (phosphoserine). One can recognise an MIF4G domain in the interval 34–249; it reads AARIKKDITF…KQLILSREND (216 aa). Residues 738-780 form a disordered region; it reads ANEPVQENTSEEQEDTKMQPVDAVDEQPSENNQTAADATNEEK.

It belongs to the NCBP1 family. Component of the nuclear cap-binding complex (CBC), a heterodimer composed of cbc1 and cbc2 that interacts with capped RNAs.

Its subcellular location is the cytoplasm. The protein resides in the perinuclear region. It is found in the nucleus. In terms of biological role, component of the CBC complex, which binds cotranscriptionally to the 5'-cap of pre-mRNAs and is involved in maturation, export and degradation of nuclear mRNAs. This is Nuclear cap-binding protein subunit 1 (cbc1) from Schizosaccharomyces pombe (strain 972 / ATCC 24843) (Fission yeast).